Consider the following 188-residue polypeptide: Dual specificity protein phosphatase 18 (188 aa).

The region spanning 19 to 160 is the Tyrosine-protein phosphatase domain; the sequence is GLSQITKSLF…LIHYELQLFG (142 aa). A sufficient for mitochondrial localization region spans residues 95–141; it reads MQKGRTLLHCAAGVSRSAALCLAYLMKYHAMSLVDAHTWTKSCRPII. Catalysis depends on Cys-104, which acts as the Phosphocysteine intermediate.

This sequence belongs to the protein-tyrosine phosphatase family. Non-receptor class dual specificity subfamily.

Its subcellular location is the cytoplasm. The protein resides in the nucleus. It localises to the mitochondrion inner membrane. The catalysed reaction is O-phospho-L-tyrosyl-[protein] + H2O = L-tyrosyl-[protein] + phosphate. It catalyses the reaction O-phospho-L-seryl-[protein] + H2O = L-seryl-[protein] + phosphate. The enzyme catalyses O-phospho-L-threonyl-[protein] + H2O = L-threonyl-[protein] + phosphate. Functionally, can dephosphorylate single and diphosphorylated synthetic MAPK peptides, with preference for the phosphotyrosine and diphosphorylated forms over phosphothreonine. In vitro, dephosphorylates p-nitrophenyl phosphate (pNPP). The protein is Dual specificity protein phosphatase 18 (Dusp18) of Mus musculus (Mouse).